The primary structure comprises 142 residues: HTH-type transcriptional regulator MntR (142 aa).

The HTH dtxR-type domain maps to 1–63 (MPTPSMEDYI…YEKYRGLVLT (63 aa)). Residues Asp-8, Glu-11, His-77, Glu-99, Glu-102, and His-103 each coordinate Mn(2+).

Belongs to the DtxR/MntR family. Homodimer.

The protein localises to the cytoplasm. Its activity is regulated as follows. DNA binding is strongly activated by Mn(2+). In terms of biological role, central regulator of manganese homeostasis. In Bacillus cereus (strain G9842), this protein is HTH-type transcriptional regulator MntR.